A 464-amino-acid polypeptide reads, in one-letter code: Tyrosine aminotransferase (464 aa).

Lys-284 is modified (N6-(pyridoxal phosphate)lysine).

The protein belongs to the class-I pyridoxal-phosphate-dependent aminotransferase family. In terms of assembly, homodimer. Requires pyridoxal 5'-phosphate as cofactor. In terms of tissue distribution, expressed in the muscle. Expressed in the hypodermis and intestine.

The enzyme catalyses L-tyrosine + 2-oxoglutarate = 3-(4-hydroxyphenyl)pyruvate + L-glutamate. The catalysed reaction is 3-hydroxy-L-phenylalanine + 2-oxoglutarate = 3-(3-hydroxyphenyl)pyruvate + L-glutamate. The protein operates within amino-acid degradation; L-phenylalanine degradation; acetoacetate and fumarate from L-phenylalanine: step 2/6. Its function is as follows. Transaminase involved in tyrosine breakdown. Converts tyrosine to p-hydroxyphenylpyruvate. Has no transaminase activity towards phenylalanine. Plays protective role against oxidative stress, metabolizing meta-tyrosine and negatively regulating its accumulation. Plays a role in modulating the daf-2/insulin receptor-like transduction pathway through regulating tyrosine levels. Negatively regulates dauer formation. Plays a role in longevity. This Caenorhabditis elegans protein is Tyrosine aminotransferase.